The primary structure comprises 291 residues: Protein-export membrane protein SecF (291 aa).

The next 6 membrane-spanning stretches (helical) occupy residues 19–39 (LVVIPLIILAVALLIIASWYV), 134–154 (LALGGVGVAFLGMSVLVFLMF), 156–176 (VFVPSIAVVVSAFSDIAISVA), 187–209 (LGTVAALLMIIGYSVDSDILLNN), 226–246 (MRTGVTMTLTSIIAMSVMAAV), and 256–278 (AAIGTVLVFGLIADLMNTYLLNL).

The protein belongs to the SecD/SecF family. SecF subfamily. As to quaternary structure, part of the protein translocation apparatus. Forms a complex with SecD.

The protein resides in the cell membrane. Its function is as follows. Involved in protein export. The sequence is that of Protein-export membrane protein SecF from Haloquadratum walsbyi (strain DSM 16790 / HBSQ001).